Consider the following 492-residue polypeptide: UTP--glucose-1-phosphate uridylyltransferase (492 aa).

UTP-binding positions include 110–113 (LNGG), Lys124, Gln183, and Gly210. 112–113 (GG) lines the substrate pocket. Lys124 serves as a coordination point for Mg(2+). Residues His211 and 239–241 (NID) contribute to the substrate site. Residues Asp241 and Lys379 each coordinate UTP. Residue Asp241 coordinates Mg(2+). The active site involves Lys379. The interval 441–492 (VLTVSGNVLFGKNVVLKGTVIILADEKSKICVPDGSVLEDNIIYGNLPIIDH) is oligomerization.

It belongs to the UDPGP type 1 family. As to quaternary structure, homooctamer.

The enzyme catalyses alpha-D-glucose 1-phosphate + UTP + H(+) = UDP-alpha-D-glucose + diphosphate. In terms of biological role, plays a central role as a glucosyl donor in cellular metabolic pathways. The protein is UTP--glucose-1-phosphate uridylyltransferase (UGP1) of Encephalitozoon cuniculi (strain GB-M1) (Microsporidian parasite).